A 396-amino-acid polypeptide reads, in one-letter code: uncharacterized protein (396 aa).

Lys-219 carries the N6-(pyridoxal phosphate)lysine modification.

Belongs to the class-V pyridoxal-phosphate-dependent aminotransferase family. The cofactor is pyridoxal 5'-phosphate.

Its subcellular location is the cytoplasm. The protein localises to the nucleus. This is an uncharacterized protein from Schizosaccharomyces pombe (strain 972 / ATCC 24843) (Fission yeast).